The chain runs to 276 residues: Large ribosomal subunit protein uL2 (276 aa).

The segment at 218-276 (PYVRGSAMNPVDHPHGGGEGRAPIGRPAPSTPWGKPALGLKTRKKNKKSNKYIVRRRKK) is disordered. The span at 258 to 276 (KTRKKNKKSNKYIVRRRKK) shows a compositional bias: basic residues.

This sequence belongs to the universal ribosomal protein uL2 family. As to quaternary structure, part of the 50S ribosomal subunit. Forms a bridge to the 30S subunit in the 70S ribosome.

One of the primary rRNA binding proteins. Required for association of the 30S and 50S subunits to form the 70S ribosome, for tRNA binding and peptide bond formation. It has been suggested to have peptidyltransferase activity; this is somewhat controversial. Makes several contacts with the 16S rRNA in the 70S ribosome. The protein is Large ribosomal subunit protein uL2 of Finegoldia magna (strain ATCC 29328 / DSM 20472 / WAL 2508) (Peptostreptococcus magnus).